The sequence spans 353 residues: Rhodopsin (353 aa).

Residues 1 to 36 lie on the Extracellular side of the membrane; sequence MNGTEGPYFYVPMVNTSGIVRSPYEYPQYYLVNPAA. 2 N-linked (GlcNAc...) asparagine glycosylation sites follow: Asn2 and Asn15. The helical transmembrane segment at 37-61 threads the bilayer; sequence YAALGAYMFLLILVGFPINFLTLYV. Over 62 to 73 the chain is Cytoplasmic; it reads TIEHKKLRTPLN. A helical membrane pass occupies residues 74 to 96; sequence YILLNLAVADLFMVFGGFTTTMY. Residues 97 to 110 are Extracellular-facing; the sequence is TSMHGYFVLGRLGC. Cysteines 110 and 187 form a disulfide. Residues 111–133 traverse the membrane as a helical segment; sequence NIEGFFATLGGEIALWSLVVLAI. Positions 134 to 136 match the 'Ionic lock' involved in activated form stabilization motif; it reads ERW. The Cytoplasmic segment spans residues 134–152; it reads ERWVVVCKPISNFRFGENH. Residues 153–173 form a helical membrane-spanning segment; that stretch reads AIMGLAFTWLMALACAAPPLV. The Extracellular segment spans residues 174-202; that stretch reads GWSRYIPEGMQCSCGIDYYTRAEGFNNES. Asn200 carries an N-linked (GlcNAc...) asparagine glycan. The helical transmembrane segment at 203 to 224 threads the bilayer; sequence FVIYMFICHFSIPLLVVFFCYG. Topologically, residues 225–252 are cytoplasmic; that stretch reads RLLCAVKEAAAAQQESETTQRAEREVTR. Residues 253–274 traverse the membrane as a helical segment; the sequence is MVIMMVIAFLVCWLPYASVAWW. The Extracellular portion of the chain corresponds to 275-286; sequence IFTHQGSDFGPV. The helical transmembrane segment at 287 to 308 threads the bilayer; the sequence is FMTIPAFFAKSSSIYNPMIYIC. Residue Lys296 is modified to N6-(retinylidene)lysine. The Cytoplasmic segment spans residues 309–353; the sequence is LNKQFRHCMITTLCCGKNPFEEEEGASTASKTEASSVSSSSVSPA. Residues Cys322 and Cys323 are each lipidated (S-palmitoyl cysteine). Residues 331-353 form a disordered region; it reads EEGASTASKTEASSVSSSSVSPA. Over residues 334-353 the composition is skewed to low complexity; the sequence is ASTASKTEASSVSSSSVSPA.

The protein belongs to the G-protein coupled receptor 1 family. Opsin subfamily. Phosphorylated on some or all of the serine and threonine residues present in the C-terminal region. In terms of processing, contains one covalently linked retinal chromophore.

It is found in the membrane. It localises to the cell projection. The protein localises to the cilium. The protein resides in the photoreceptor outer segment. In terms of biological role, photoreceptor required for image-forming vision at low light intensity. While most salt water fish species use retinal as chromophore, most freshwater fish use 3-dehydroretinal, or a mixture of retinal and 3-dehydroretinal. Light-induced isomerization of 11-cis to all-trans retinal triggers a conformational change that activates signaling via G-proteins. Subsequent receptor phosphorylation mediates displacement of the bound G-protein alpha subunit by arrestin and terminates signaling. This chain is Rhodopsin (rho), found in Diplodus vulgaris (Common two-banded seabream).